Here is a 363-residue protein sequence, read N- to C-terminus: Ethanolamine kinase 1 (363 aa).

This sequence belongs to the choline/ethanolamine kinase family.

Its subcellular location is the cytoplasm. The enzyme catalyses ethanolamine + ATP = phosphoethanolamine + ADP + H(+). Its pathway is phospholipid metabolism; phosphatidylethanolamine biosynthesis; phosphatidylethanolamine from ethanolamine: step 1/3. Its function is as follows. Highly specific for ethanolamine phosphorylation. May be a rate-controlling step in phosphatidylethanolamine biosynthesis. The chain is Ethanolamine kinase 1 (Etnk1) from Mus musculus (Mouse).